The chain runs to 287 residues: ATP synthase gamma chain (287 aa).

It belongs to the ATPase gamma chain family. In terms of assembly, F-type ATPases have 2 components, CF(1) - the catalytic core - and CF(0) - the membrane proton channel. CF(1) has five subunits: alpha(3), beta(3), gamma(1), delta(1), epsilon(1). CF(0) has three main subunits: a, b and c.

Its subcellular location is the cell inner membrane. Functionally, produces ATP from ADP in the presence of a proton gradient across the membrane. The gamma chain is believed to be important in regulating ATPase activity and the flow of protons through the CF(0) complex. This Azotobacter vinelandii (strain DJ / ATCC BAA-1303) protein is ATP synthase gamma chain.